The primary structure comprises 87 residues: Putative regulatory protein GWCH70_1057 (87 aa).

This sequence belongs to the RemA family.

In Geobacillus sp. (strain WCH70), this protein is Putative regulatory protein GWCH70_1057.